The chain runs to 212 residues: Small ribosomal subunit protein uS3 (212 aa).

The region spanning 38–106 (IRKFVKKTLY…EFAIEVNEIR (69 aa)) is the KH type-2 domain.

This sequence belongs to the universal ribosomal protein uS3 family. As to quaternary structure, part of the 30S ribosomal subunit. Forms a tight complex with proteins S10 and S14.

Its function is as follows. Binds the lower part of the 30S subunit head. Binds mRNA in the 70S ribosome, positioning it for translation. In Nitratidesulfovibrio vulgaris (strain ATCC 29579 / DSM 644 / CCUG 34227 / NCIMB 8303 / VKM B-1760 / Hildenborough) (Desulfovibrio vulgaris), this protein is Small ribosomal subunit protein uS3.